The chain runs to 219 residues: Dephospho-CoA kinase (219 aa).

One can recognise a DPCK domain in the interval 8 to 215 (LVGVTGGIGS…EAAASGPDCQ (208 aa)). Residue 16–21 (GSGKST) coordinates ATP.

The protein belongs to the CoaE family.

Its subcellular location is the cytoplasm. It catalyses the reaction 3'-dephospho-CoA + ATP = ADP + CoA + H(+). It participates in cofactor biosynthesis; coenzyme A biosynthesis; CoA from (R)-pantothenate: step 5/5. Functionally, catalyzes the phosphorylation of the 3'-hydroxyl group of dephosphocoenzyme A to form coenzyme A. The polypeptide is Dephospho-CoA kinase (Chlorobium luteolum (strain DSM 273 / BCRC 81028 / 2530) (Pelodictyon luteolum)).